A 287-amino-acid polypeptide reads, in one-letter code: CRISPR-associated endoribonuclease Cas6 1 (287 aa).

It belongs to the CRISPR-associated endoribonuclease Cas6 family. In terms of assembly, part of the aCascade ribonucleoprotein complex, minimally composed of Csa2 and Cas5a, which binds crRNA. Other possible components of aCascade in strain P1 are Cas6b (SSO1437) and Csa5 (SSO1443), while SSO1399, Cas5b (SSO1400) and SSO1401 have sometimes been seen weakly associated. Csa2 is probably the major RNA-binding subunit. The Csa2-Cas5a-crRNA complex also binds target DNA homologous to crRNA, probably forming an R-loop. Purified aCascade forms a filament about 6 nm in width.

Functionally, CRISPR (clustered regularly interspaced short palindromic repeat) is an adaptive immune system that provides protection against mobile genetic elements (viruses, transposable elements and conjugative plasmids). CRISPR clusters contain spacers, sequences complementary to antecedent mobile elements, and target invading nucleic acids. CRISPR clusters are transcribed and processed into CRISPR RNA (crRNA). The protein is CRISPR-associated endoribonuclease Cas6 1 (cas6a) of Saccharolobus solfataricus (strain ATCC 35092 / DSM 1617 / JCM 11322 / P2) (Sulfolobus solfataricus).